We begin with the raw amino-acid sequence, 980 residues long: Envelope glycoprotein B (980 aa).

The span at 1–14 (MSSGCRSVGGSTWG) shows a compositional bias: polar residues. 2 disordered regions span residues 1 to 20 (MSSGCRSVGGSTWGNWRGDG) and 88 to 118 (TTPSPPTSTPTSMSTHSHGTVDPTLLPTETP). The first 86 residues, 1 to 86 (MSSGCRSVGG…LFGSCVVRAV (86 aa)), serve as a signal peptide directing secretion. The Virion surface portion of the chain corresponds to 87 to 849 (PTTPSPPTST…SGIASFLNNP (763 aa)). Over residues 96-118 (TPTSMSTHSHGTVDPTLLPTETP) the composition is skewed to low complexity. Cystine bridges form between Cys-140–Cys-647, Cys-157–Cys-603, Cys-231–Cys-296, Cys-389–Cys-437, and Cys-668–Cys-708. Asn-165 is a glycosylation site (N-linked (GlcNAc...) asparagine; by host). Positions 197 to 203 (VWKGYSH) are involved in fusion and/or binding to host membrane. Asn-275 carries N-linked (GlcNAc...) asparagine; by host glycosylation. An involved in fusion and/or binding to host membrane region spans residues 282–290 (GWMPWRHYT). N-linked (GlcNAc...) asparagine; by host glycosylation is found at Asn-380, Asn-423, Asn-497, Asn-514, Asn-515, and Asn-560. Low complexity predominate over residues 505 to 516 (LLNPNANNNNNT). Residues 505-535 (LLNPNANNNNNTTRRRRSLLSVPEPQPTQDG) are disordered. N-linked (GlcNAc...) asparagine; by host glycosylation is found at Asn-727 and Asn-749. Hydrophobic membrane proximal region stretches follow at residues 794 to 847 (IDSV…SFLN) and 823 to 843 (AVGTLVLAAAGAVVSTVSGIA). The helical transmembrane segment at 850–870 (FGGLAIGLLVIAGLVAAFFAY) threads the bilayer. Residues 871–980 (RYVMQIRSNP…NDTMENEKMV (110 aa)) are Intravirion-facing. The Golgi targeting motif lies at 925–928 (YMSM). The Internalization motif motif lies at 965 to 968 (YTRL).

It belongs to the herpesviridae glycoprotein B family. Homotrimer; disulfide-linked. Binds to heparan sulfate proteoglycans. Interacts with gH/gL heterodimer. A proteolytic cleavage by host furin generates two subunits that remain linked by disulfide bonds.

Its subcellular location is the virion membrane. It is found in the host cell membrane. It localises to the host endosome membrane. The protein localises to the host Golgi apparatus membrane. Functionally, envelope glycoprotein that forms spikes at the surface of virion envelope. Essential for the initial attachment to heparan sulfate moieties of the host cell surface proteoglycans. Involved in fusion of viral and cellular membranes leading to virus entry into the host cell. Following initial binding to its host receptors, membrane fusion is mediated by the fusion machinery composed at least of gB and the heterodimer gH/gL. May be involved in the fusion between the virion envelope and the outer nuclear membrane during virion egress. This is Envelope glycoprotein B from Equine herpesvirus 1 (strain AB1) (EHV-1).